A 185-amino-acid chain; its full sequence is Ribosome-recycling factor (185 aa).

Residues 142–165 form a disordered region; sequence IVKDGDAGEDEGSRAEKELDGLTK.

The protein belongs to the RRF family.

Its subcellular location is the cytoplasm. In terms of biological role, responsible for the release of ribosomes from messenger RNA at the termination of protein biosynthesis. May increase the efficiency of translation by recycling ribosomes from one round of translation to another. This Renibacterium salmoninarum (strain ATCC 33209 / DSM 20767 / JCM 11484 / NBRC 15589 / NCIMB 2235) protein is Ribosome-recycling factor.